A 131-amino-acid polypeptide reads, in one-letter code: UPF0146 protein PH0209 (131 aa).

The protein belongs to the UPF0146 family.

The polypeptide is UPF0146 protein PH0209 (Pyrococcus horikoshii (strain ATCC 700860 / DSM 12428 / JCM 9974 / NBRC 100139 / OT-3)).